Reading from the N-terminus, the 712-residue chain is Phosphatase and actin regulator 4 (712 aa).

Disordered regions lie at residues 1–22 and 90–405; these read MGQADISRPVNPDGVEEIGQPT and RGLL…EVPK. The stretch at 72–97 is one RPEL 1 repeat; the sequence is EVLERKISMRKPREELVKRGLLLEDS. Positions 114–124 are enriched in polar residues; it reads NGHTTLIGSTR. Serine 125, serine 127, serine 140, and serine 156 each carry phosphoserine. Residues 136–152 are compositionally biased toward basic and acidic residues; that stretch reads ERIASLRKPVPEEEPKK. A compositionally biased stretch (low complexity) spans 198-230; that stretch reads ATSSGSLARPSSSASTTAITTAPAATMAATNPA. The span at 233–243 shows a compositional bias: polar residues; that stretch reads VHSSGPPSQAP. Low complexity predominate over residues 245–267; it reads TLPAAPASTHTTATLSLTHTGPA. 3 positions are modified to phosphoserine: serine 282, serine 303, and serine 353. A compositionally biased stretch (low complexity) spans 345 to 357; that stretch reads SEPLLTPSSSPLP. Positions 358-371 are enriched in pro residues; sequence AHIPPEPPQSPPFP. Phosphoserine is present on serine 436. Threonine 441 is subject to Phosphothreonine. Residues serine 452, serine 462, serine 473, serine 524, serine 526, serine 567, and serine 600 each carry the phosphoserine modification. The interval 507–557 is disordered; the sequence is VIPKLPQCLQEEEEGKESDSDSEGPIQYRDEEDEDESHHSALANKVKRKDT. Over residues 516-528 the composition is skewed to acidic residues; that stretch reads QEEEEGKESDSDS. 2 RPEL repeats span residues 593–618 and 631–656; these read NTLIRRLSQRPTPEELEQRNILQPKN and RRLTRKLSQRPTVAELLARKILRFNE. The tract at residues 602-626 is disordered; the sequence is RPTPEELEQRNILQPKNEADRQAEK. Serine 638 carries the phosphoserine modification.

Belongs to the phosphatase and actin regulator family. As to quaternary structure, binds PPP1CA and actin.

Its subcellular location is the cytoplasm. It is found in the cell projection. The protein localises to the lamellipodium. In terms of biological role, regulator of protein phosphatase 1 (PP1) required for neural tube and optic fissure closure, and enteric neural crest cell (ENCCs) migration during development. Acts as an activator of PP1 by interacting with PPP1CA and preventing phosphorylation of PPP1CA at 'Thr-320'. During neural tube closure, localizes to the ventral neural tube and activates PP1, leading to down-regulate cell proliferation within cranial neural tissue and the neural retina. Also acts as a regulator of migration of enteric neural crest cells (ENCCs) by activating PP1, leading to dephosphorylation and subsequent activation of cofilin (COF1 or COF2) and repression of the integrin signaling through the RHO/ROCK pathway. The protein is Phosphatase and actin regulator 4 (PHACTR4) of Bos taurus (Bovine).